We begin with the raw amino-acid sequence, 363 residues long: Uroporphyrinogen decarboxylase (363 aa).

Substrate-binding positions include 36 to 40, Asp85, Tyr160, Ser215, and His339; that span reads RQAGR.

Belongs to the uroporphyrinogen decarboxylase family. In terms of assembly, homodimer.

It localises to the cytoplasm. The enzyme catalyses uroporphyrinogen III + 4 H(+) = coproporphyrinogen III + 4 CO2. It participates in porphyrin-containing compound metabolism; protoporphyrin-IX biosynthesis; coproporphyrinogen-III from 5-aminolevulinate: step 4/4. In terms of biological role, catalyzes the decarboxylation of four acetate groups of uroporphyrinogen-III to yield coproporphyrinogen-III. The polypeptide is Uroporphyrinogen decarboxylase (Saccharopolyspora erythraea (strain ATCC 11635 / DSM 40517 / JCM 4748 / NBRC 13426 / NCIMB 8594 / NRRL 2338)).